The following is a 419-amino-acid chain: uncharacterized protein (419 aa).

7 helical membrane passes run 16 to 36 (IMAK…LVVT), 186 to 206 (LVYI…SMIA), 235 to 255 (LLGI…AGSL), 283 to 303 (VIYA…LAAF), 318 to 338 (ITPM…GLNA), 340 to 360 (DAGF…IMFL), and 369 to 389 (FWQA…LAVI).

The protein to M.jannaschii MJ1024.

The protein resides in the cell membrane. This is an uncharacterized protein from Bacillus subtilis (strain 168).